Reading from the N-terminus, the 64-residue chain is Disintegrin (64 aa).

Residues 1–64 form the Disintegrin domain; sequence NSVHPCCDPV…SDCPRNRYNH (64 aa). 4 cysteine pairs are disulfide-bonded: C6-C29, C20-C26, C25-C50, and C38-C57. The Cell attachment site; atypical (MLD) motif lies at 42–44; the sequence is MLD.

The protein belongs to the disintegrin family. Dimeric disintegrin subfamily. Heterodimer; disulfide-linked. In terms of tissue distribution, expressed by the venom gland.

The protein localises to the secreted. Its function is as follows. Inhibits adhesion of cells expressing alpha-4/beta-1 (ITGA4/ITGB1) and alpha-4/beta-7 (ITGA4/ITGB7) integrins to the natural ligands vascular cell adhesion molecule 1 (VCAM-1) and mucosal addressin cell adhesion molecule 1 (MADCAM-1). The polypeptide is Disintegrin (Echis carinatus (Saw-scaled viper)).